The primary structure comprises 4306 residues: Cytoplasmic dynein 2 heavy chain 1 (4306 aa).

Residues 1 to 1650 (MAGSLGDVRK…YVQMVDSELQ (1650 aa)) are stem. 145–152 (LGIVLRKS) contacts ATP. Positions 669–696 (KELEGYIQKLQNAAERLATENRRLRKWH) form a coiled coil. 4 AAA regions span residues 1651–1875 (YTYE…VLRG), 1941–2161 (SALK…KQND), 2249–2505 (LTAD…WVLG), and 2617–2862 (HYGR…ESCK). ATP-binding positions include 1689-1696 (GPAGTGKT), 1979-1986 (GPSGAGKS), 2291-2298 (GPEGCGKG), and 2655-2662 (GRSGVGRR). The segment at 2880 to 3168 (AISSSKKKEL…AEVSKAQETI (289 aa)) is stalk. 3 coiled-coil regions span residues 2896 to 2981 (LQAG…KEVQ), 3108 to 3199 (LETE…LATL), and 3407 to 3441 (IQHE…SLLE). AAA stretches follow at residues 3243 to 3472 (LCTE…LIQD) and 3689 to 3904 (MALF…VIDR).

This sequence belongs to the dynein heavy chain family. As to quaternary structure, the cytoplasmic dynein complex 2 is probably composed by a heavy chain DYNC2H1 homodimer and a number of DYNC2LI1 light intermediate chains. Detected in brain, lung, spleen and kidney (at protein level). Enriched in the ependymal layer lining the lateral ventricles (at protein level).

The protein resides in the cytoplasm. The protein localises to the cytoskeleton. It is found in the cilium axoneme. Its subcellular location is the cell membrane. Its function is as follows. May function as a motor for intraflagellar retrograde transport. Functions in cilia biogenesis. According to PubMed:8666668, it may play a role in transport between endoplasmic reticulum and Golgi or organization of the Golgi in cells. This is Cytoplasmic dynein 2 heavy chain 1 (Dync2h1) from Mus musculus (Mouse).